Consider the following 1286-residue polypeptide: Autotransporter adhesin AIDA-I (1286 aa).

A signal peptide spans 1 to 49 (MNKAYSIIWSHSRQAWIVASELARGHGFVLAKNTLLVLAVVSTIGNAFA). S102, S111, and S116 each carry an O-alpha-linked (glycero-D-manno-heptose) serine glycan. A glycan (O-alpha-linked (glycero-D-manno-heptose) threonine) is linked at T154. S242, S252, S334, S391, S409, S539, S545, S558, S569, S576, S577, and S582 each carry an O-alpha-linked (glycero-D-manno-heptose) serine glycan. One can recognise an Autotransporter domain in the interval 998–1286 (TQPESASVWM…SGALGIKYSF (289 aa)). A beta stranded transmembrane segment spans residues 1006 to 1012 (WMKITGG). At 1013-1029 (ISSGKLNDGQNKTTTNQ) the chain is on the extracellular side. Residues 1030-1040 (FINQLGGDIYK) traverse the membrane as a beta stranded segment. The Periplasmic segment spans residues 1041-1047 (FHAEQLG). The chain crosses the membrane as a beta stranded span at residues 1048-1058 (DFTLGIMGGYA). The Extracellular segment spans residues 1059 to 1079 (NAKGKTINYTSNKAARNTLDG). The chain crosses the membrane as a beta stranded span at residues 1080–1087 (YSVGVYGT). At 1088-1097 (WYQNGENATG) the chain is on the periplasmic side. A beta stranded transmembrane segment spans residues 1098-1108 (LFAETWMQYNW). Topologically, residues 1109–1126 (FNASVKGDGLEEEKYNLN) are extracellular. Residues 1127-1138 (GLTASAGGGYNL) form a beta stranded membrane-spanning segment. The Periplasmic portion of the chain corresponds to 1139–1152 (NVHTWTSPEGITGE). A beta stranded membrane pass occupies residues 1153–1164 (FWLQPHLQAVWM). Over 1165 to 1186 (GVTPDTHQEDNGTVVQGAGKNN) the chain is Extracellular. Residues 1187–1198 (IQTKAGIRASWK) form a beta stranded membrane-spanning segment. Topologically, residues 1199–1210 (VKSTLDKDTGRR) are periplasmic. A beta stranded membrane pass occupies residues 1211–1221 (FRPYIEANWIH). Topologically, residues 1222 to 1242 (NTHEFGVKMSDDSQLLSGSRN) are extracellular. The chain crosses the membrane as a beta stranded span at residues 1243–1253 (QGEIKTGIEGV). Residues 1254-1259 (ITQNLS) are Periplasmic-facing. Residues 1260–1267 (VNGGVAYQ) form a beta stranded membrane-spanning segment. Over 1268–1275 (AGGHGSNA) the chain is Extracellular. The chain crosses the membrane as a beta stranded span at residues 1276-1284 (ISGALGIKY). Residues 1285-1286 (SF) lie on the Periplasmic side of the membrane.

In terms of assembly, intercellular AIDA-AIDA interaction is responsible for bacterial autoaggregation. AIDA can also interact with antigen 43 (Ag43), and the resultant intercellular AIDA-Ag43 interaction causes cell aggregation. Glycosylated on serine residues by AHH and AAH2 in the cytoplasm. Glycosylated with an average of 19 heptose residues. Glycosylated with either ADP-L, D-heptose or ADP-D, D-heptose. Glycosylation is required for protein folding/stabilization and resistance to protease-mediated degradation. Glycosylation is required for bacteria adhesion to mammalian cells. Glycosylation is dispensable for cell outer membrane localization. Glycosylation is dispensable for AIDA-mediated cell-cell aggregation and induction of biofilm formation. Glycosylation is dispensable for interaction with Ag43.

The protein resides in the periplasm. Its subcellular location is the secreted. It localises to the cell surface. It is found in the cell outer membrane. Functionally, potent bacterial adhesin that mediates bacterial attachment to a broad variety of human and other mammalian cells. Has additional virulence properties, as it is capable of mediating bacterial autoaggregation via intercellular self-recognition and it is a highly efficient initiator of biofilm formation. In Escherichia coli, this protein is Autotransporter adhesin AIDA-I (aidA).